A 462-amino-acid chain; its full sequence is 3-isopropylmalate dehydratase large subunit (462 aa).

[4Fe-4S] cluster is bound by residues Cys-337, Cys-397, and Cys-400.

The protein belongs to the aconitase/IPM isomerase family. LeuC type 1 subfamily. In terms of assembly, heterodimer of LeuC and LeuD. The cofactor is [4Fe-4S] cluster.

The enzyme catalyses (2R,3S)-3-isopropylmalate = (2S)-2-isopropylmalate. It functions in the pathway amino-acid biosynthesis; L-leucine biosynthesis; L-leucine from 3-methyl-2-oxobutanoate: step 2/4. Its function is as follows. Catalyzes the isomerization between 2-isopropylmalate and 3-isopropylmalate, via the formation of 2-isopropylmaleate. This chain is 3-isopropylmalate dehydratase large subunit, found in Listeria monocytogenes serotype 4b (strain CLIP80459).